The sequence spans 645 residues: Threonine--tRNA ligase (645 aa).

The 63-residue stretch at 1–63 (MDQIKIKFPD…ESDGDIEIVT (63 aa)) folds into the TGS domain. Residues 242–540 (DHRKIGKELE…LTEETKGAFP (299 aa)) form a catalytic region. Zn(2+)-binding residues include cysteine 336, histidine 387, and histidine 517.

It belongs to the class-II aminoacyl-tRNA synthetase family. In terms of assembly, homodimer. The cofactor is Zn(2+).

Its subcellular location is the cytoplasm. It carries out the reaction tRNA(Thr) + L-threonine + ATP = L-threonyl-tRNA(Thr) + AMP + diphosphate + H(+). Functionally, catalyzes the attachment of threonine to tRNA(Thr) in a two-step reaction: L-threonine is first activated by ATP to form Thr-AMP and then transferred to the acceptor end of tRNA(Thr). Also edits incorrectly charged L-seryl-tRNA(Thr). The sequence is that of Threonine--tRNA ligase from Staphylococcus saprophyticus subsp. saprophyticus (strain ATCC 15305 / DSM 20229 / NCIMB 8711 / NCTC 7292 / S-41).